Reading from the N-terminus, the 341-residue chain is Methionine import ATP-binding protein MetN 2 (341 aa).

The ABC transporter domain occupies isoleucine 2–isoleucine 241. Residue glycine 38–serine 45 coordinates ATP.

The protein belongs to the ABC transporter superfamily. Methionine importer (TC 3.A.1.24) family. As to quaternary structure, the complex is composed of two ATP-binding proteins (MetN), two transmembrane proteins (MetI) and a solute-binding protein (MetQ).

The protein localises to the cell membrane. It catalyses the reaction L-methionine(out) + ATP + H2O = L-methionine(in) + ADP + phosphate + H(+). It carries out the reaction D-methionine(out) + ATP + H2O = D-methionine(in) + ADP + phosphate + H(+). In terms of biological role, part of the ABC transporter complex MetNIQ involved in methionine import. Responsible for energy coupling to the transport system. The sequence is that of Methionine import ATP-binding protein MetN 2 from Shouchella clausii (strain KSM-K16) (Alkalihalobacillus clausii).